A 338-amino-acid polypeptide reads, in one-letter code: 4-hydroxythreonine-4-phosphate dehydrogenase (338 aa).

His-140 and Thr-141 together coordinate substrate. The a divalent metal cation site is built by His-172, His-217, and His-271. Substrate is bound by residues Lys-279, Asn-288, and Arg-297.

This sequence belongs to the PdxA family. In terms of assembly, homodimer. The cofactor is a divalent metal cation.

It localises to the cytoplasm. The enzyme catalyses 4-(phosphooxy)-L-threonine + NAD(+) = 3-amino-2-oxopropyl phosphate + CO2 + NADH. It participates in cofactor biosynthesis; pyridoxine 5'-phosphate biosynthesis; pyridoxine 5'-phosphate from D-erythrose 4-phosphate: step 4/5. Functionally, catalyzes the NAD(P)-dependent oxidation of 4-(phosphooxy)-L-threonine (HTP) into 2-amino-3-oxo-4-(phosphooxy)butyric acid which spontaneously decarboxylates to form 3-amino-2-oxopropyl phosphate (AHAP). The protein is 4-hydroxythreonine-4-phosphate dehydrogenase of Prosthecochloris aestuarii (strain DSM 271 / SK 413).